Here is a 261-residue protein sequence, read N- to C-terminus: 5'-nucleotidase SurE (261 aa).

Positions 8, 9, 39, and 91 each coordinate a divalent metal cation.

Belongs to the SurE nucleotidase family. A divalent metal cation is required as a cofactor.

Its subcellular location is the cytoplasm. It carries out the reaction a ribonucleoside 5'-phosphate + H2O = a ribonucleoside + phosphate. In terms of biological role, nucleotidase that shows phosphatase activity on nucleoside 5'-monophosphates. This is 5'-nucleotidase SurE from Polaromonas naphthalenivorans (strain CJ2).